Consider the following 2343-residue polypeptide: Pecanex-like protein 1 (2343 aa).

The next 2 helical transmembrane spans lie at 33–53 (ALHL…YMAL) and 57–77 (MIIV…LKMV). Disordered regions lie at residues 98 to 163 (FTDQ…GSSR), 271 to 290 (SHSY…SSSA), 306 to 691 (QQQR…TRAR), and 749 to 826 (TRSR…QGQQ). The span at 143–163 (SSRNSYAGLDPSNQIGSGSSR) shows a compositional bias: polar residues. Basic residues predominate over residues 272-282 (HSYRKEHRPRG). A compositionally biased stretch (low complexity) spans 372-390 (SLRSLSTRSSGSTESYCSG). Residues 396–412 (NSTLSSYKSEQTSSTHI) show a composition bias toward polar residues. 3 stretches are compositionally biased toward basic and acidic residues: residues 416-457 (LSEH…DKTA), 507-521 (RPPE…EQGE), and 530-546 (KVCK…DVRP). Residues 556–571 (TSAHKPGRRRTGKKRA) show a composition bias toward basic residues. 3 stretches are compositionally biased toward low complexity: residues 624–637 (SDSS…SCQS), 769–780 (AATGAAQASEEA), and 809–826 (TLLI…QGQQ). 13 consecutive transmembrane segments (helical) span residues 978 to 998 (FWIL…LLAL), 1009 to 1029 (ILAV…LIQG), 1034 to 1054 (IWVF…LKSV), 1068 to 1088 (IIAY…WLLD), 1118 to 1138 (LVIV…LPQV), 1162 to 1182 (LLAA…LYGL), 1195 to 1215 (HIPV…YHLS), 1268 to 1288 (LVVC…TVFT), 1296 to 1316 (YVLY…LPQV), 1406 to 1426 (SFSS…FFKF), 1434 to 1454 (TMLL…ELLY), 1458 to 1478 (FVYT…HAFA), and 1493 to 1513 (AVVS…AIFI). Residues 2050-2120 (EDSDTGGGTS…VQSSLVRQSP (71 aa)) are disordered. Composition is skewed to polar residues over residues 2060-2080 (CPAN…QGST) and 2094-2117 (PTTS…SLVR).

It belongs to the pecanex family. Specifically expressed in the germ line and not in the somatic cells of the testis, reaching its peak at the pachytene stage of the meiotic prophase. Detected in pachytene spermatocytes and round spermatids (at protein level).

The protein localises to the membrane. This is Pecanex-like protein 1 from Rattus norvegicus (Rat).